A 452-amino-acid polypeptide reads, in one-letter code: MRECISIHIGQAGIQVGNACWELYCLEHGIQPDGQMPGDKTVGGGDDAFNTFFSETGAGKHVPRAVFVDLEPTVIDEVRTGAYRQLFHPEQLISGKEDAANNFARGHYTIGKEIVDLCLDRIRKLADNCTGLQGFLVFNAVGGGTGSGLGSLLLERLSVDYGKKSKLGFTVYPSPQVSTSVVEPYNSVLSTHSLLEHTDVAVLLDNEAIYDICRRSLDIERPTYTNLNRLVSQVISSLTASLRFDGALNVDVTEFQTNLVPYPRIHFMLSSYAPVISAEKAYHEQLSVAEITNSAFEPSSMMAKCDPRHGKYMACCLMYRGDVVPKDVNAAVATIKTKRTIQFVDWCPTGFKCGINYQPPTVVPGGDLAKVQRAVCMISNSTSVAEVFSRIDHKFDLMYAKRAFVHWYVGEGMEEGEFSEAREDLAALEKDYEEVGAESGDGDDDGLGEEEY.

Gln-11 is a binding site for GTP. Residue Lys-40 is modified to N6-acetyllysine. GTP is bound by residues Glu-71, Gly-144, Thr-145, Thr-179, Asn-206, and Asn-228. Glu-71 provides a ligand contact to Mg(2+). The active site involves Glu-254. A disordered region spans residues 430 to 452 (KDYEEVGAESGDGDDDGLGEEEY). The span at 431–452 (DYEEVGAESGDGDDDGLGEEEY) shows a compositional bias: acidic residues.

It belongs to the tubulin family. As to quaternary structure, dimer of alpha and beta chains. A typical microtubule is a hollow water-filled tube with an outer diameter of 25 nm and an inner diameter of 15 nM. Alpha-beta heterodimers associate head-to-tail to form protofilaments running lengthwise along the microtubule wall with the beta-tubulin subunit facing the microtubule plus end conferring a structural polarity. Microtubules usually have 13 protofilaments but different protofilament numbers can be found in some organisms and specialized cells. The cofactor is Mg(2+). Undergoes a tyrosination/detyrosination cycle, the cyclic removal and re-addition of a C-terminal tyrosine residue by the enzymes tubulin tyrosine carboxypeptidase (TTCP) and tubulin tyrosine ligase (TTL), respectively. In terms of processing, acetylation of alpha chains at Lys-40 stabilizes microtubules and affects affinity and processivity of microtubule motors. This modification has a role in multiple cellular functions, ranging from cell motility, cell cycle progression or cell differentiation to intracellular trafficking and signaling.

The protein localises to the cytoplasm. It is found in the cytoskeleton. The catalysed reaction is GTP + H2O = GDP + phosphate + H(+). In terms of biological role, tubulin is the major constituent of microtubules, a cylinder consisting of laterally associated linear protofilaments composed of alpha- and beta-tubulin heterodimers. Microtubules grow by the addition of GTP-tubulin dimers to the microtubule end, where a stabilizing cap forms. Below the cap, tubulin dimers are in GDP-bound state, owing to GTPase activity of alpha-tubulin. In Pisum sativum (Garden pea), this protein is Tubulin alpha-1 chain (TUBA1).